The chain runs to 362 residues: Chorismate synthase (362 aa).

Arginine 47 is an NADP(+) binding site. Residues 124–126 (RAS), glycine 286, 301–305 (KPTAT), and arginine 327 contribute to the FMN site.

The protein belongs to the chorismate synthase family. In terms of assembly, homotetramer. Requires FMNH2 as cofactor.

It carries out the reaction 5-O-(1-carboxyvinyl)-3-phosphoshikimate = chorismate + phosphate. Its pathway is metabolic intermediate biosynthesis; chorismate biosynthesis; chorismate from D-erythrose 4-phosphate and phosphoenolpyruvate: step 7/7. Functionally, catalyzes the anti-1,4-elimination of the C-3 phosphate and the C-6 proR hydrogen from 5-enolpyruvylshikimate-3-phosphate (EPSP) to yield chorismate, which is the branch point compound that serves as the starting substrate for the three terminal pathways of aromatic amino acid biosynthesis. This reaction introduces a second double bond into the aromatic ring system. The polypeptide is Chorismate synthase (Synechococcus sp. (strain WH7803)).